Reading from the N-terminus, the 912-residue chain is Metabotropic glutamate receptor 4 (912 aa).

Positions methionine 1–glycine 32 are cleaved as a signal peptide. Topologically, residues lysine 33–tryptophan 587 are extracellular. Cysteine 67 and cysteine 109 are disulfide-bonded. The N-linked (GlcNAc...) asparagine glycan is linked to asparagine 98. Residues serine 159, alanine 180–threonine 182, and tyrosine 230 each bind L-glutamate. 7 cysteine pairs are disulfide-bonded: cysteine 249-cysteine 538, cysteine 372-cysteine 388, cysteine 428-cysteine 435, cysteine 520-cysteine 539, cysteine 524-cysteine 542, cysteine 545-cysteine 557, and cysteine 560-cysteine 573. An N-linked (GlcNAc...) asparagine glycan is attached at asparagine 301. Aspartate 312 contributes to the L-glutamate binding site. Lysine 405 contributes to the L-glutamate binding site. Asparagine 454 and asparagine 484 each carry an N-linked (GlcNAc...) asparagine glycan. Asparagine 569 carries an N-linked (GlcNAc...) asparagine glycan. The chain crosses the membrane as a helical span at residues alanine 588–valine 610. Residues arginine 611–glutamate 624 are Cytoplasmic-facing. Residues leucine 625–alanine 645 traverse the membrane as a helical segment. Residues glutamate 646–arginine 656 are Extracellular-facing. The helical transmembrane segment at isoleucine 657–asparagine 675 threads the bilayer. Over arginine 676–glutamine 699 the chain is Cytoplasmic. A helical transmembrane segment spans residues leucine 700–valine 720. Topologically, residues aspartate 721–aspartate 750 are extracellular. Residues leucine 751 to isoleucine 772 traverse the membrane as a helical segment. Topologically, residues lysine 773 to lysine 785 are cytoplasmic. The chain crosses the membrane as a helical span at residues proline 786–threonine 808. Topologically, residues serine 809–threonine 821 are extracellular. Residues leucine 822–phenylalanine 847 traverse the membrane as a helical segment. Over histidine 848–isoleucine 912 the chain is Cytoplasmic.

This sequence belongs to the G-protein coupled receptor 3 family. Interacts with PICK1. Is widely distributed in the CNS. Predominant expression is seen in the granule cells of the cerebellum.

The protein localises to the cell membrane. Functionally, G-protein coupled receptor for glutamate. Ligand binding causes a conformation change that triggers signaling via guanine nucleotide-binding proteins (G proteins) and modulates the activity of down-stream effectors. Signaling inhibits adenylate cyclase activity. In Rattus norvegicus (Rat), this protein is Metabotropic glutamate receptor 4 (Grm4).